A 478-amino-acid polypeptide reads, in one-letter code: Zinc metalloproteinase/disintegrin (478 aa).

The signal sequence occupies residues 1–20; the sequence is MIQVLLVTICLAAFPYQGSS. Positions 21-187 are excised as a propeptide; it reads IILESGNVND…PIKKASHLNL (167 aa). Residues 193 to 389 form the Peptidase M12B domain; sequence RYVEIVIVVD…QKPQCILKKP (197 aa). Disulfide bonds link Cys304–Cys384, Cys344–Cys368, and Cys346–Cys351. Position 329 (His329) interacts with Zn(2+). Residue Glu330 is part of the active site. 2 residues coordinate Zn(2+): His333 and His339. A propeptide spanning residues 390-408 is cleaved from the precursor; it reads LRTDTVSTPVSGNELLEAR. The region spanning 397 to 478 is the Disintegrin domain; sequence TPVSGNELLE…ADCPRNVLYG (82 aa). 6 disulfide bridges follow: Cys411-Cys420, Cys413-Cys421, Cys426-Cys440, Cys434-Cys464, Cys439-Cys443, and Cys452-Cys471. Positions 474-478 are excised as a propeptide; it reads NVLYG.

The protein belongs to the venom metalloproteinase (M12B) family. P-II subfamily. P-IIa sub-subfamily. It depends on Zn(2+) as a cofactor. Expressed by the venom gland.

It localises to the secreted. Snake venom zinc metalloproteinase that causes hemorrhage by provoking the degradation of the sub-endothelial matrix proteins (fibronectin, laminin, type IV collagen, nidogen, and gelatins). Its function is as follows. Displays low cytotoxicity. In vitro, inhibits cancer cell migration (human breast cancer cell line MDA-MB-231) with a significant rate after 24 hours of incubation. This chain is Zinc metalloproteinase/disintegrin (MPII), found in Crotalus durissus collilineatus (Brazilian rattlesnake).